The following is a 388-amino-acid chain: Chorismate synthase (388 aa).

Arginine 39 and arginine 45 together coordinate NADP(+). The disordered stretch occupies residues 95 to 118; the sequence is EKNEKSRRVSRPRPGHADLVGGMK. FMN is bound by residues 130-132, 251-252, glycine 296, 311-315, and arginine 337; these read RSS, NA, and KPIPT.

Belongs to the chorismate synthase family. Homotetramer. Requires FMNH2 as cofactor.

The catalysed reaction is 5-O-(1-carboxyvinyl)-3-phosphoshikimate = chorismate + phosphate. The protein operates within metabolic intermediate biosynthesis; chorismate biosynthesis; chorismate from D-erythrose 4-phosphate and phosphoenolpyruvate: step 7/7. Catalyzes the anti-1,4-elimination of the C-3 phosphate and the C-6 proR hydrogen from 5-enolpyruvylshikimate-3-phosphate (EPSP) to yield chorismate, which is the branch point compound that serves as the starting substrate for the three terminal pathways of aromatic amino acid biosynthesis. This reaction introduces a second double bond into the aromatic ring system. This Listeria monocytogenes serovar 1/2a (strain ATCC BAA-679 / EGD-e) protein is Chorismate synthase.